Consider the following 416-residue polypeptide: 3-hydroxy-3-methylglutaryl coenzyme A reductase AN1593 (416 aa).

Residue E103 is the Charge relay system of the active site. An N-linked (GlcNAc...) asparagine glycan is attached at N167. Catalysis depends on K236, which acts as the Charge relay system. A glycan (N-linked (GlcNAc...) asparagine) is linked at N277. The Charge relay system role is filled by D312. The helical transmembrane segment at L380–S400 threads the bilayer. H408 serves as the catalytic Proton donor.

This sequence belongs to the HMG-CoA reductase family.

Its subcellular location is the membrane. It catalyses the reaction (R)-mevalonate + 2 NADP(+) + CoA = (3S)-3-hydroxy-3-methylglutaryl-CoA + 2 NADPH + 2 H(+). It functions in the pathway metabolic intermediate biosynthesis; (R)-mevalonate biosynthesis; (R)-mevalonate from acetyl-CoA: step 3/3. In terms of biological role, 3-hydroxy-3-methylglutaryl coenzyme A reductase; part of the gene cluster that mediates the biosynthesis of the diterpene ent-pimara-8(14),15-diene (PD). Within the cluster, the HMG-CoA reductase AN1593 functions in the mevalonate pathway, which produces isoprenoid precursors. The geranylgeranyl pyrophosphate (GGPP) synthase AN1592 is needed in the formation of GGPP, the precursor for diterpenes. Lastly, the pimaradiene synthase pbcA performs the 2 cyclization steps that convert GGPP to ent-pimara-8(14),15-diene. The putative roles of the remaining cluster enzymes in ent-pimara-8(14),15-diene biosynthesis is unclear. The cytochrome P450 monooxygenase AN1598, the glutathione S-transferase AN1595, the oxidoreductases AN1596 and AN1597 probably function as decorative enzymes. It is possible that in biological conditions the compound is oxidized to ent-pimara-8(14),15-dien-19-oic acid, which is a bioactive diterpene compound predominant in many plant extracts. This Emericella nidulans (strain FGSC A4 / ATCC 38163 / CBS 112.46 / NRRL 194 / M139) (Aspergillus nidulans) protein is 3-hydroxy-3-methylglutaryl coenzyme A reductase AN1593.